Reading from the N-terminus, the 610-residue chain is Elongation factor 4 (610 aa).

The tr-type G domain occupies 11–193 (EKIRNFSIIA…QIVEKVPAPT (183 aa)). GTP is bound by residues 23–28 (DHGKST) and 140–143 (NKID).

Belongs to the TRAFAC class translation factor GTPase superfamily. Classic translation factor GTPase family. LepA subfamily.

Its subcellular location is the cell membrane. The enzyme catalyses GTP + H2O = GDP + phosphate + H(+). In terms of biological role, required for accurate and efficient protein synthesis under certain stress conditions. May act as a fidelity factor of the translation reaction, by catalyzing a one-codon backward translocation of tRNAs on improperly translocated ribosomes. Back-translocation proceeds from a post-translocation (POST) complex to a pre-translocation (PRE) complex, thus giving elongation factor G a second chance to translocate the tRNAs correctly. Binds to ribosomes in a GTP-dependent manner. The protein is Elongation factor 4 of Streptococcus pyogenes serotype M3 (strain ATCC BAA-595 / MGAS315).